The primary structure comprises 300 residues: Bifunctional protein FolD (300 aa).

Residues 172-174 (GRS), S206, and I247 contribute to the NADP(+) site.

The protein belongs to the tetrahydrofolate dehydrogenase/cyclohydrolase family. In terms of assembly, homodimer.

The enzyme catalyses (6R)-5,10-methylene-5,6,7,8-tetrahydrofolate + NADP(+) = (6R)-5,10-methenyltetrahydrofolate + NADPH. It catalyses the reaction (6R)-5,10-methenyltetrahydrofolate + H2O = (6R)-10-formyltetrahydrofolate + H(+). It functions in the pathway one-carbon metabolism; tetrahydrofolate interconversion. Its function is as follows. Catalyzes the oxidation of 5,10-methylenetetrahydrofolate to 5,10-methenyltetrahydrofolate and then the hydrolysis of 5,10-methenyltetrahydrofolate to 10-formyltetrahydrofolate. The chain is Bifunctional protein FolD from Rhodopirellula baltica (strain DSM 10527 / NCIMB 13988 / SH1).